Reading from the N-terminus, the 59-residue chain is U-limacoditoxin(3)-Dv33 (59 aa).

The signal sequence occupies residues 1 to 19 (MSKVILLCLIFALFACSIS).

The protein belongs to the limacoditoxin-3 family. In terms of processing, the natural peptide is not amidated. The recombinant peptide is amidated. As to expression, expressed by the venom secretory cell of the spine. The spine is a cuticular structure containing a single large nucleated venom-secreting cell at its base. It is an independent unit capable of producing, storing and injecting venom. On the back of D.vulnerans caterpillars, spines are grouped together by 50 to 100 to form scoli, of which there are eight in D.vulnerans.

The protein localises to the secreted. Functionally, probable toxin. Shows a relatively potent antiparasitic activity against the major pathogenic nematode of ruminants (H.contortus, EC(50)=2.6 uM). Does not show insecticidal and antimicrobial activities. Does not induce increase in intracellular calcium in mouse DRG neurons, suggesting that it does not induce pain. In Doratifera vulnerans (Mottled cup moth), this protein is U-limacoditoxin(3)-Dv33.